Here is a 469-residue protein sequence, read N- to C-terminus: Cytochrome P450 85A1 (469 aa).

Residues 1–21 (MVLVAIGVVVAAAVVVSSLLL) form a helical membrane-spanning segment. A heme-binding site is contributed by Cys-419.

This sequence belongs to the cytochrome P450 family. Heme serves as cofactor. Expressed at low levels in all the tissues, but preferentially in the leaf sheath.

The protein localises to the membrane. The catalysed reaction is 6-deoxoteasterone + reduced [NADPH--hemoprotein reductase] + O2 = 6alpha-hydroxyteasterone + oxidized [NADPH--hemoprotein reductase] + H2O + H(+). It carries out the reaction 6alpha-hydroxytyphasterol + reduced [NADPH--hemoprotein reductase] + O2 = teasterone + oxidized [NADPH--hemoprotein reductase] + 2 H2O + H(+). It catalyses the reaction 3-dehydro-6-deoxoteasterone + reduced [NADPH--hemoprotein reductase] + O2 = 3-dehydro-6alpha-hydroxyteasterone + oxidized [NADPH--hemoprotein reductase] + H2O + H(+). The enzyme catalyses 3-dehydro-6alpha-hydroxyteasterone + reduced [NADPH--hemoprotein reductase] + O2 = 3-dehydroteasterone + oxidized [NADPH--hemoprotein reductase] + 2 H2O + H(+). The catalysed reaction is 6-deoxotyphasterol + reduced [NADPH--hemoprotein reductase] + O2 = 6alpha-hydroxytyphasterol + oxidized [NADPH--hemoprotein reductase] + H2O + H(+). It carries out the reaction 6alpha-hydroxytyphasterol + reduced [NADPH--hemoprotein reductase] + O2 = typhasterol + oxidized [NADPH--hemoprotein reductase] + 2 H2O + H(+). It catalyses the reaction 3-dehydro-6-deoxoteasterone + 2 reduced [NADPH--hemoprotein reductase] + 2 O2 = 3-dehydroteasterone + 2 oxidized [NADPH--hemoprotein reductase] + 3 H2O + 2 H(+). The enzyme catalyses 6-deoxoteasterone + 2 reduced [NADPH--hemoprotein reductase] + 2 O2 = teasterone + 2 oxidized [NADPH--hemoprotein reductase] + 3 H2O + 2 H(+). The catalysed reaction is 6-deoxotyphasterol + 2 reduced [NADPH--hemoprotein reductase] + 2 O2 = typhasterol + 2 oxidized [NADPH--hemoprotein reductase] + 3 H2O + 2 H(+). The protein operates within plant hormone biosynthesis; brassinosteroid biosynthesis. In terms of biological role, catalyzes the C6-oxidation step in brassinosteroids biosynthesis. May convert 6-deoxoteasterone (6-deoxoTE) to teasterone (TE), 3-dehydro-6-deoxoteasterone (6-deoxo3DT, 6-deoxo3DHT) to 3-dehydroteasterone (3DT, 3-DHT), and 6-deoxotyphasterol (6-deoxoTY) to typhasterol (TY). Involved in the organization and elongation of the leaf and stem cells. Not able to convert 6-deoxocastasterone (6-deoxoCS) and castasterone (CS) to brassinolide (BL). This Oryza sativa subsp. japonica (Rice) protein is Cytochrome P450 85A1.